Reading from the N-terminus, the 351-residue chain is Lipoyl synthase (351 aa).

Over residues 1 to 10 (MNDSGNSSKV) the composition is skewed to polar residues. Positions 1-27 (MNDSGNSSKVNVRPPSAGLGAPSPGKR) are disordered. Residues 14 to 24 (PPSAGLGAPSP) show a composition bias toward low complexity. Cysteine 74, cysteine 79, cysteine 85, cysteine 100, cysteine 104, cysteine 107, and serine 311 together coordinate [4Fe-4S] cluster. In terms of domain architecture, Radical SAM core spans 86–300 (WEDREATFLI…KEQAKEIGFS (215 aa)).

The protein belongs to the radical SAM superfamily. Lipoyl synthase family. It depends on [4Fe-4S] cluster as a cofactor.

The protein localises to the cytoplasm. The catalysed reaction is [[Fe-S] cluster scaffold protein carrying a second [4Fe-4S](2+) cluster] + N(6)-octanoyl-L-lysyl-[protein] + 2 oxidized [2Fe-2S]-[ferredoxin] + 2 S-adenosyl-L-methionine + 4 H(+) = [[Fe-S] cluster scaffold protein] + N(6)-[(R)-dihydrolipoyl]-L-lysyl-[protein] + 4 Fe(3+) + 2 hydrogen sulfide + 2 5'-deoxyadenosine + 2 L-methionine + 2 reduced [2Fe-2S]-[ferredoxin]. The protein operates within protein modification; protein lipoylation via endogenous pathway; protein N(6)-(lipoyl)lysine from octanoyl-[acyl-carrier-protein]: step 2/2. Its function is as follows. Catalyzes the radical-mediated insertion of two sulfur atoms into the C-6 and C-8 positions of the octanoyl moiety bound to the lipoyl domains of lipoate-dependent enzymes, thereby converting the octanoylated domains into lipoylated derivatives. The polypeptide is Lipoyl synthase (Tropheryma whipplei (strain TW08/27) (Whipple's bacillus)).